The primary structure comprises 83 residues: Mu-theraphotoxin-Hhn2j 4 (83 aa).

A signal peptide spans 1–21; the sequence is MKASMFLALAGSVLLFVVGYA. The propeptide occupies 22 to 48; the sequence is SESEEKEFPIELLSKIFAVDVFKGEER. 3 disulfides stabilise this stretch: Cys-50–Cys-65, Cys-57–Cys-70, and Cys-64–Cys-77. Leu-81 is modified (leucine amide).

This sequence belongs to the neurotoxin 10 (Hwtx-1) family. 15 (Hntx-3) subfamily. Monomer. Expressed by the venom gland.

It localises to the secreted. Its function is as follows. Lethal neurotoxin. Selectively blocks tetrodotoxin-sensitive voltage-gated sodium channels (Nav). Does not affect tetrodotoxin-resistant voltage-gated sodium channels or calcium channels. In Cyriopagopus hainanus (Chinese bird spider), this protein is Mu-theraphotoxin-Hhn2j 4.